Here is a 98-residue protein sequence, read N- to C-terminus: C-C motif chemokine 19 (98 aa).

The signal sequence occupies residues 1 to 21; that stretch reads MALLLALSLLVLWTSPAPTLS. Disulfide bonds link Cys-29–Cys-55 and Cys-30–Cys-71.

This sequence belongs to the intercrine beta (chemokine CC) family. In terms of assembly, interacts with TNFAIP6 (via Link domain). Expressed at high levels in the lymph nodes, thymus and appendix. Intermediate levels seen in colon and trachea, while low levels found in spleen, small intestine, lung, kidney and stomach.

The protein resides in the secreted. In terms of biological role, may play a role not only in inflammatory and immunological responses but also in normal lymphocyte recirculation and homing. May play an important role in trafficking of T-cells in thymus, and T-cell and B-cell migration to secondary lymphoid organs. Binds to chemokine receptor CCR7. Recombinant CCL19 shows potent chemotactic activity for T-cells and B-cells but not for granulocytes and monocytes. Binds to atypical chemokine receptor ACKR4 and mediates the recruitment of beta-arrestin (ARRB1/2) to ACKR4. This is C-C motif chemokine 19 (CCL19) from Homo sapiens (Human).